The following is a 132-amino-acid chain: Small ribosomal subunit protein uS8 (132 aa).

It belongs to the universal ribosomal protein uS8 family. Part of the 30S ribosomal subunit. Contacts proteins S5 and S12.

Functionally, one of the primary rRNA binding proteins, it binds directly to 16S rRNA central domain where it helps coordinate assembly of the platform of the 30S subunit. The sequence is that of Small ribosomal subunit protein uS8 from Gluconacetobacter diazotrophicus (strain ATCC 49037 / DSM 5601 / CCUG 37298 / CIP 103539 / LMG 7603 / PAl5).